The chain runs to 632 residues: Glycerophosphodiester phosphodiesterase domain-containing protein 4 (632 aa).

Over 1–64 (MEETQDSSSS…GSCCCSRKEQ (64 aa)) the chain is Cytoplasmic. The helical transmembrane segment at 65 to 85 (FFYMCLVIAFILSVLFLFVWV) threads the bilayer. Topologically, residues 86 to 114 (ETSNEYNGFDWVVYLGTGCWFFWSILVLS) are extracellular. The helical transmembrane segment at 115–135 (AAGIMVAYTTLLLLLGFLLLW) threads the bilayer. Topologically, residues 136-147 (ERIELNLHTSHK) are cytoplasmic. A helical transmembrane segment spans residues 148–168 (VFICLVIVLCSFLLAVLSHFW). Residues 169–180 (KDKWLIAGLSLQ) lie on the Extracellular side of the membrane. A helical transmembrane segment spans residues 181–201 (IFAPFVHLSLITVMIIISWPL). Residues 202 to 240 (SICVARLESEVKVRRYRMADYEQEIQERCNVFQRLRALQ) lie on the Cytoplasmic side of the membrane. Residues 241 to 261 (IAAGLSFLIILLCLYLMPLGI) traverse the membrane as a helical segment. Topologically, residues 262–542 (YSPCILKKEN…SRPLFFMTPG (281 aa)) are extracellular. The GP-PDE domain maps to 276-533 (PTLFGHRGAP…DNIELLNQLS (258 aa)). Residues glutamate 308, aspartate 310, and histidine 323 each contribute to the a divalent metal cation site. N-linked (GlcNAc...) asparagine glycans are attached at residues asparagine 343, asparagine 349, asparagine 384, and asparagine 473. The chain crosses the membrane as a helical span at residues 543–563 (FYMFMWLFLDIASAVIIGFVF). At 564-632 (CYNWIKEIKR…QKTEPKTENL (69 aa)) the chain is on the cytoplasmic side. Positions 596-632 (ENNDASQQKPEVAPTSANLAPENMIELQKTEPKTENL) are disordered. Over residues 623–632 (QKTEPKTENL) the composition is skewed to basic and acidic residues.

This sequence belongs to the glycerophosphoryl diester phosphodiesterase family. Detected in testis, in particular in spermatocytes.

The protein resides in the cytoplasm. The protein localises to the membrane. This chain is Glycerophosphodiester phosphodiesterase domain-containing protein 4 (Gdpd4), found in Mus musculus (Mouse).